A 396-amino-acid polypeptide reads, in one-letter code: Putative 3-phosphoinositide-dependent protein kinase 2 (396 aa).

The span at 1–11 (MVRTQTESSTP) shows a compositional bias: polar residues. A disordered region spans residues 1 to 53 (MVRTQTESSTPPGIPGGSRQGPAMDGTAAEPRPGAGSLQHAQPPPQPRKKRPE). The 261-residue stretch at 55–315 (FKFGKILGEG…YGPLKAHPFF (261 aa)) folds into the Protein kinase domain. ATP contacts are provided by residues 65 to 67 (SFS) and lysine 84. A PIF-pocket region spans residues 86–130 (LEKRHIIKENKVPYVTRERDVMSRLDHPFFVKLYFTFQDDEKLYF). ATP contacts are provided by residues 133–135 (SYA) and glutamate 139. Residue aspartate 178 is the Proton acceptor of the active site. 2 residues coordinate ATP: glutamate 182 and aspartate 196.

It belongs to the protein kinase superfamily. AGC Ser/Thr protein kinase family. PDPK1 subfamily. In terms of processing, phosphorylated on tyrosine and serine/threonine.

It is found in the cytoplasm. Its subcellular location is the membrane. The enzyme catalyses L-seryl-[protein] + ATP = O-phospho-L-seryl-[protein] + ADP + H(+). The catalysed reaction is L-threonyl-[protein] + ATP = O-phospho-L-threonyl-[protein] + ADP + H(+). Its function is as follows. Phosphorylates and activates not only PKB/AKT, but also PKA, PKC-zeta, RPS6KA1 and RPS6KB1. May play a general role in signaling processes and in development. This Homo sapiens (Human) protein is Putative 3-phosphoinositide-dependent protein kinase 2.